The sequence spans 741 residues: Transcription activator of gluconeogenesis BDBG_05438 (741 aa).

The disordered stretch occupies residues 1-70 (MTASTRNGSP…NAKDPLRPRR (70 aa)). Over residues 25–61 (KSMTTTPANPPETKSQTNGKGSGTAQSSQKPASTSAN) the composition is skewed to polar residues. The zn(2)-C6 fungal-type DNA-binding region spans 77–105 (CFACQRAHLTCGDERPCQRCIKRGLQDAC). Disordered stretches follow at residues 135-163 (QANTTRNIPNQRGNASNSNSNKVSRQSVS), 202-239 (SVFHAQSPSSTQNFDLSSNPQTQNLSSAMSQTASSVSG), 285-321 (GAGDTPPSDSATQRGSIGRSSGTFTAQNFGDSANNQS), 401-421 (TNLMHPTNTPQQSRISTPGLK), 559-590 (GSSLSSASSVRGSSTFTPRNNNTHNSIDPHTG), and 655-741 (FHGK…AKRG). Positions 202–226 (SVFHAQSPSSTQNFDLSSNPQTQNL) are enriched in polar residues. Over residues 227–238 (SSAMSQTASSVS) the composition is skewed to low complexity. Polar residues-rich tracts occupy residues 291-321 (PSDSATQRGSIGRSSGTFTAQNFGDSANNQS) and 401-416 (TNLMHPTNTPQQSRIS). A compositionally biased stretch (low complexity) spans 560–572 (SSLSSASSVRGSS). Positions 573 to 586 (TFTPRNNNTHNSID) are enriched in polar residues. Over residues 672–718 (TGTTTSGDVATTTATGTSTSNGANANTNGNNTNPNDPSTAASSSASS) the composition is skewed to low complexity. A compositionally biased stretch (basic residues) spans 723–732 (RSNHLGKRGG).

Belongs to the ERT1/acuK family.

Its subcellular location is the nucleus. Transcription factor which regulates nonfermentable carbon utilization. Activator of gluconeogenetic genes. The chain is Transcription activator of gluconeogenesis BDBG_05438 from Blastomyces gilchristii (strain SLH14081) (Blastomyces dermatitidis).